Here is a 60-residue protein sequence, read N- to C-terminus: Insect toxin mu-NPTX-Nc1a (60 aa).

The first 19 residues, 1 to 19, serve as a signal peptide directing secretion; that stretch reads MIYQVVLLLLVSPAPVSAA.

Post-translationally, contains 4 disulfide bonds. As to expression, expressed by the venom gland.

Its subcellular location is the secreted. In terms of biological role, insect-specific toxin. Blocks voltage-gated potassium and sodium channels. The polypeptide is Insect toxin mu-NPTX-Nc1a (Trichonephila clavata (Joro spider)).